Reading from the N-terminus, the 236-residue chain is LexA repressor (236 aa).

The H-T-H motif DNA-binding region spans 26–46 (FDEMKEALDLRSKSGIHRLIT). Active-site for autocatalytic cleavage activity residues include S157 and K195.

It belongs to the peptidase S24 family. In terms of assembly, homodimer.

The enzyme catalyses Hydrolysis of Ala-|-Gly bond in repressor LexA.. Represses a number of genes involved in the response to DNA damage (SOS response), including recA and lexA. In the presence of single-stranded DNA, RecA interacts with LexA causing an autocatalytic cleavage which disrupts the DNA-binding part of LexA, leading to derepression of the SOS regulon and eventually DNA repair. This is LexA repressor from Azorhizobium caulinodans (strain ATCC 43989 / DSM 5975 / JCM 20966 / LMG 6465 / NBRC 14845 / NCIMB 13405 / ORS 571).